Reading from the N-terminus, the 342-residue chain is Platelet-activating factor receptor (342 aa).

At 1-16 the chain is on the extracellular side; that stretch reads MEPHDSSHMDSEFRYT. A helical membrane pass occupies residues 17–38; the sequence is LFPIVYSIIFVLGVIANGYVLW. The Cytoplasmic segment spans residues 39 to 54; the sequence is VFARLYPCKKFNEIKI. The chain crosses the membrane as a helical span at residues 55–74; that stretch reads FMVNLTMADMLFLITLPLWI. Over 75 to 91 the chain is Extracellular; it reads VYYQNQGNWILPKFLCN. An intrachain disulfide couples Cys-90 to Cys-173. The chain crosses the membrane as a helical span at residues 92-113; sequence VAGCLFFINTYCSVAFLGVITY. The Cytoplasmic segment spans residues 114–133; the sequence is NRFQAVTRPIKTAQANTRKR. Residues 134–155 traverse the membrane as a helical segment; it reads GISLSLVIWVAIVGAASYFLIL. At 156-184 the chain is on the extracellular side; it reads DSTNTVPDSAGSGNVTRCFEHYEKGSVPV. Asn-169 is a glycosylation site (N-linked (GlcNAc...) asparagine). Residues 185–205 traverse the membrane as a helical segment; sequence LIIHIFIVFSFFLVFLIILFC. Topologically, residues 206-233 are cytoplasmic; sequence NLVIIRTLLMQPVQQQRNAEVKRRALWM. Residues 234-254 form a helical membrane-spanning segment; sequence VCTVLAVFIICFVPHHVVQLP. The Extracellular portion of the chain corresponds to 255–276; that stretch reads WTLAELGFQDSKFHQAINDAHQ. The chain crosses the membrane as a helical span at residues 277–296; that stretch reads VTLCLLSTNCVLDPVIYCFL. Residues 297 to 342 lie on the Cytoplasmic side of the membrane; the sequence is TKKFRKHLTEKFYSMRSSRKCSRATTDTVTEVVVPFNQIPGNSLKN.

Belongs to the G-protein coupled receptor 1 family. Interacts with ARRB1. As to expression, expressed in the placenta, lung, left and right heart ventricles, heart atrium, leukocytes and differentiated HL-60 granulocytes.

It is found in the cell membrane. Functionally, receptor for platelet activating factor, a chemotactic phospholipid mediator that possesses potent inflammatory, smooth-muscle contractile and hypotensive activity. Seems to mediate its action via a G protein that activates a phosphatidylinositol-calcium second messenger system. The chain is Platelet-activating factor receptor (PTAFR) from Homo sapiens (Human).